Consider the following 475-residue polypeptide: Aspartyl/glutamyl-tRNA(Asn/Gln) amidotransferase subunit B (475 aa).

It belongs to the GatB/GatE family. GatB subfamily. Heterotrimer of A, B and C subunits.

It catalyses the reaction L-glutamyl-tRNA(Gln) + L-glutamine + ATP + H2O = L-glutaminyl-tRNA(Gln) + L-glutamate + ADP + phosphate + H(+). The enzyme catalyses L-aspartyl-tRNA(Asn) + L-glutamine + ATP + H2O = L-asparaginyl-tRNA(Asn) + L-glutamate + ADP + phosphate + 2 H(+). Its function is as follows. Allows the formation of correctly charged Asn-tRNA(Asn) or Gln-tRNA(Gln) through the transamidation of misacylated Asp-tRNA(Asn) or Glu-tRNA(Gln) in organisms which lack either or both of asparaginyl-tRNA or glutaminyl-tRNA synthetases. The reaction takes place in the presence of glutamine and ATP through an activated phospho-Asp-tRNA(Asn) or phospho-Glu-tRNA(Gln). In Staphylococcus saprophyticus subsp. saprophyticus (strain ATCC 15305 / DSM 20229 / NCIMB 8711 / NCTC 7292 / S-41), this protein is Aspartyl/glutamyl-tRNA(Asn/Gln) amidotransferase subunit B.